The chain runs to 220 residues: CRISPR system Cms endoribonuclease Csm3 (220 aa).

It belongs to the CRISPR-associated Csm3 family. As to quaternary structure, part of the Csm effector complex that includes at least Cas10(1), Csm2(3), Csm3(5), Csm4(1), Csm5(1) and mature crRNA. The Csm complex is elongated and slightly twisted with a maximal length of 215 Angstroms and a diameter of 75-80 Angstroms. It has been modeled to have a central protein filamant of Csm3 subunits along which the dsRNA helix of paired crRNA and target RNA binds. The filament is capped at one end by Cas10 and Csm4 and at the other end by Csm5; ssDNA is thought to bind to the N-terminal HD domain of Cas10. Csm with a precursor crRNA does not include Csm5, while Cas6, the enzyme probably involved in pre-crRNA processing, is found associated with a subset of the Csm complex. The cofactor is a metal cation.

Target ssRNase is inhibited by EDTA. Functionally, CRISPR (clustered regularly interspaced short palindromic repeat) is an adaptive immune system that provides protection against mobile genetic elements (viruses, transposable elements and conjugative plasmids). CRISPR clusters contain spacers, sequences complementary to antecedent mobile elements, and target invading nucleic acids. CRISPR clusters are transcribed and processed into CRISPR RNA (crRNA). The type III-A Csm effector complex binds crRNA and acts as a crRNA-guided RNase, DNase and cyclic oligoadenylate synthase; binding of target RNA cognate to the crRNA is required for all activities. In a heterologous host this Csm effector complex restricts ssRNA phage MS2, suggesting it may target RNA viruses in vivo. Csm functions as a non-specific ssDNase. Base-pairing between crRNA and target RNA to form a ternary Csm complex activates a ssDNase activity; target RNA cleavage suppresses the ssDNase, a temporal control that prevents uncontrolled DNA degradation. Viral RNA transcripts probably tether the Csm complex to the viral genome, recruiting Cas10 ssDNA activity which is able to degrade DNA in the transcription bubble, spatially controlling the DNase activity. In terms of biological role, this subunit has the target ssRNA endonuclease activity; it cleaves multiple sites in the target RNA at 6 nucleotide intervals. The number of cleavage sites in the target RNA correlates with the number of Csm3 subunits in the Csm effector complex. In the Csm complex target RNA and ssDNA are cleaved simultaneously, although RNase activity (of Csm3) is much faster. RNA cleavage by Csm3 is not required for ssDNase activity as Csm complex with inactive Csm3 still has ssDNase activity; however as the cleaved target RNA products dissociate away ssDNase activity decreases. The chain is CRISPR system Cms endoribonuclease Csm3 from Streptococcus thermophilus.